Here is a 545-residue protein sequence, read N- to C-terminus: CTP synthase (545 aa).

The tract at residues 1-264 (MQYIVVTGGV…ITRLSKLLNM (264 aa)) is amidoligase domain. Position 12 (Ser-12) interacts with CTP. Ser-12 contacts UTP. Position 13–18 (13–18 (GLGKGT)) interacts with ATP. Tyr-53 lines the L-glutamine pocket. ATP is bound at residue Asp-70. Mg(2+) is bound by residues Asp-70 and Glu-140. Residues 147–149 (DIE), 185–190 (KTKPTQ), and Arg-221 each bind CTP. UTP-binding positions include 185–190 (KTKPTQ) and Arg-221. One can recognise a Glutamine amidotransferase type-1 domain in the interval 294-527 (YVDLHDAYIS…VEQALIFKHR (234 aa)). Residue Gly-347 participates in L-glutamine binding. Cys-374 serves as the catalytic Nucleophile; for glutamine hydrolysis. L-glutamine-binding positions include 375-378 (LGFQ), Glu-398, and Arg-455. Residues His-500 and Glu-502 contribute to the active site.

It belongs to the CTP synthase family. Homotetramer.

It catalyses the reaction UTP + L-glutamine + ATP + H2O = CTP + L-glutamate + ADP + phosphate + 2 H(+). The enzyme catalyses L-glutamine + H2O = L-glutamate + NH4(+). The catalysed reaction is UTP + NH4(+) + ATP = CTP + ADP + phosphate + 2 H(+). It participates in pyrimidine metabolism; CTP biosynthesis via de novo pathway; CTP from UDP: step 2/2. With respect to regulation, allosterically activated by GTP, when glutamine is the substrate; GTP has no effect on the reaction when ammonia is the substrate. The allosteric effector GTP functions by stabilizing the protein conformation that binds the tetrahedral intermediate(s) formed during glutamine hydrolysis. Inhibited by the product CTP, via allosteric rather than competitive inhibition. Its function is as follows. Catalyzes the ATP-dependent amination of UTP to CTP with either L-glutamine or ammonia as the source of nitrogen. Regulates intracellular CTP levels through interactions with the four ribonucleotide triphosphates. This Thermoplasma acidophilum (strain ATCC 25905 / DSM 1728 / JCM 9062 / NBRC 15155 / AMRC-C165) protein is CTP synthase.